The following is a 146-amino-acid chain: Hemoglobin subunit beta (146 aa).

Val-1 is subject to N-acetylvaline. The 145-residue stretch at 2–146 (HLTDAEKALV…VATALAHKYH (145 aa)) folds into the Globin domain. A Phosphothreonine modification is found at Thr-12. Ser-44 is modified (phosphoserine). Residue Lys-59 is modified to N6-acetyllysine. Position 63 (His-63) interacts with heme b. Residue Lys-82 is modified to N6-acetyllysine. His-92 contributes to the heme b binding site. Cys-93 is subject to S-nitrosocysteine. An N6-acetyllysine modification is found at Lys-144.

The protein belongs to the globin family. Heterotetramer of two alpha chains and two beta chains. As to expression, red blood cells.

In terms of biological role, involved in oxygen transport from the lung to the various peripheral tissues. This Peromyscus crinitus (Canyon mouse) protein is Hemoglobin subunit beta.